We begin with the raw amino-acid sequence, 470 residues long: 5-hydroxytryptamine receptor 2A (470 aa).

Residues 1–80 (MDILCEENTS…LQEKNWSALL (80 aa)) lie on the Extracellular side of the membrane. Asn38 is a glycosylation site (N-linked (GlcNAc...) asparagine). The helical transmembrane segment at 81 to 97 (TAVVIILTIAGNILVIM) threads the bilayer. Residues 98 to 111 (AVSLEKKLQNATNY) lie on the Cytoplasmic side of the membrane. Residues 112 to 137 (FLMSLAIADMLLGFLVMPVSTLTILY) traverse the membrane as a helical segment. The Extracellular segment spans residues 138-146 (GYRWPLPSK). A helical membrane pass occupies residues 147 to 171 (LCAVWIYLDVLFSTASIMHLCAISL). A disulfide bond links Cys148 and Cys227. Asp155 is a binding site for serotonin. A DRY motif; important for ligand-induced conformation changes motif is present at residues 172 to 174 (DRY). At 172–191 (DRYVAIQNPIHHSRFNSRTK) the chain is on the cytoplasmic side. The helical transmembrane segment at 192 to 215 (AFLKIIAVWTISVGISMPIPVFGL) threads the bilayer. Residues 216 to 232 (QDDSKVFKEGSCLLADE) are Extracellular-facing. A helical transmembrane segment spans residues 233–258 (NFVLIGSFVAFFIPLTIMVITYFLTI). The Cytoplasmic segment spans residues 259–321 (KSLQKEATLC…QSISNEQKAC (63 aa)). At Ser280 the chain carries Phosphoserine. A helical transmembrane segment spans residues 322 to 347 (KVLGIVFFLFVVMWCPFFITNIMAVI). Asn342 provides a ligand contact to serotonin. An intrachain disulfide couples Cys348 to Cys352. Residues 348–355 (CKESCNRD) lie on the Extracellular side of the membrane. The helical transmembrane segment at 356-381 (VIEALLNVFVWIGYLSSAVNPLVYTL) threads the bilayer. The short motif at 375–379 (NPLVY) is the NPxxY motif; important for ligand-induced conformation changes and signaling element. The Cytoplasmic portion of the chain corresponds to 382 to 470 (FNKTYRSAFS…NTVNEKVSCV (89 aa)). A disordered region spans residues 424 to 470 (QMGPKKNSKKDDKTTDNDCTMVALGKEHPEDAPADSSNTVNEKVSCV). A compositionally biased stretch (polar residues) spans 458-470 (DSSNTVNEKVSCV). Residues 468 to 470 (SCV) carry the PDZ-binding motif.

The protein belongs to the G-protein coupled receptor 1 family. As to quaternary structure, interacts (via C-terminus) with MPDZ and PATJ. May interact (via C-terminus) with MPP3, PRDX6, DLG4, DLG1, CASK, APBA1 and MAGI2. Interacts with GRM2 and DRD2; this may affect signaling.

It localises to the cell membrane. Its subcellular location is the cell projection. The protein localises to the dendrite. It is found in the axon. The protein resides in the cytoplasmic vesicle. It localises to the membrane. Its subcellular location is the caveola. The protein localises to the presynapse. With respect to regulation, G-protein coupled receptor activity is regulated by lipids: oleamide increases HTR2A-mediated activity. Functionally, G-protein coupled receptor for 5-hydroxytryptamine (serotonin). Also functions as a receptor for various drugs and psychoactive substances, including mescaline, psilocybin, 1-(2,5-dimethoxy-4-iodophenyl)-2-aminopropane (DOI) and lysergic acid diethylamide (LSD). Ligand binding causes a conformation change that triggers signaling via guanine nucleotide-binding proteins (G proteins) and modulates the activity of downstream effectors. HTR2A is coupled to G(q)/G(11) G alpha proteins and activates phospholipase C-beta, releasing diacylglycerol (DAG) and inositol 1,4,5-trisphosphate (IP3) second messengers that modulate the activity of phosphatidylinositol 3-kinase and promote the release of Ca(2+) ions from intracellular stores, respectively. Beta-arrestin family members inhibit signaling via G proteins and mediate activation of alternative signaling pathways. Affects neural activity, perception, cognition and mood. Plays a role in the regulation of behavior, including responses to anxiogenic situations and psychoactive substances. Plays a role in intestinal smooth muscle contraction, and may play a role in arterial vasoconstriction. The sequence is that of 5-hydroxytryptamine receptor 2A (HTR2A) from Bos taurus (Bovine).